Consider the following 22-residue polypeptide: Large ribosomal subunit protein bL32 (22 aa).

The interval 1-22 (CVQQNKKSRSARDMXXSXDALE) is disordered. Residues 13–22 (DMXXSXDALE) are compositionally biased toward low complexity.

Belongs to the bacterial ribosomal protein bL32 family.

In Ectopseudomonas mendocina (Pseudomonas mendocina), this protein is Large ribosomal subunit protein bL32 (rpmF).